A 324-amino-acid chain; its full sequence is Probable UDP-sugar transporter protein SLC35A4 (324 aa).

Over 1–18 (MSVEDGGMPGLGRPRQAR) the chain is Cytoplasmic. The helical transmembrane segment at 19–39 (WTLMLLLSTAMYGAHAPLLAL) threads the bilayer. Topologically, residues 40–52 (CHVDGRVPFRPSS) are lumenal. Residues 53–73 (AVLLTELTKLLLCAFSLLVGW) form a helical membrane-spanning segment. The Cytoplasmic segment spans residues 74 to 85 (QAWPQGPPPWRQ). The chain crosses the membrane as a helical span at residues 86 to 106 (AAPFALSALLYGANNNLVIYL). The Lumenal segment spans residues 107–142 (QRYMDPSTYQVLSNLKIGSTAVLYCLCLRHRLSVRQ). Residues 143 to 163 (GLALLLLMAAGACYAAGGLQV) form a helical membrane-spanning segment. At 164–180 (PGNTLPSPPPAAAASPM) the chain is on the cytoplasmic side. The helical transmembrane segment at 181–201 (PLHITPLGLLLLILYCLISGL) threads the bilayer. Residues 202 to 214 (SSVYTELLMKRQR) are Lumenal-facing. The chain crosses the membrane as a helical span at residues 215–235 (LPLALQNLFLYTFGVLLNLGL). Topologically, residues 236-250 (HAGGGSGPGLLEGFS) are cytoplasmic. Residues 251–271 (GWAALVVLSQALNGLLMSAVM) form a helical membrane-spanning segment. Residues 272-275 (KHGS) are Lumenal-facing. The chain crosses the membrane as a helical span at residues 276–298 (SITRLFVVSCSLVVNAVLSAVLL). The Cytoplasmic portion of the chain corresponds to 299–324 (RLQLTAAFFLATLLIGLAMRLYYGSR).

It belongs to the nucleotide-sugar transporter family. SLC35A subfamily. In terms of assembly, found in a complex with SLC35A2 and SLC35A3.

It localises to the golgi apparatus membrane. It catalyses the reaction CDP-L-ribitol(in) + CDP(out) = CDP-L-ribitol(out) + CDP(in). Mediates the transport of CDP-ribitol. Does not exhibit CMP-sialic acid, UDP-galactose and UDP-N-acetylglucosamine transport activity. The sequence is that of Probable UDP-sugar transporter protein SLC35A4 from Homo sapiens (Human).